We begin with the raw amino-acid sequence, 260 residues long: UPF0246 protein Mmwyl1_3597 (260 aa).

This sequence belongs to the UPF0246 family.

This is UPF0246 protein Mmwyl1_3597 from Marinomonas sp. (strain MWYL1).